Consider the following 156-residue polypeptide: Small ribosomal subunit protein uS7 (156 aa).

Belongs to the universal ribosomal protein uS7 family. Part of the 30S ribosomal subunit. Contacts proteins S9 and S11.

Its function is as follows. One of the primary rRNA binding proteins, it binds directly to 16S rRNA where it nucleates assembly of the head domain of the 30S subunit. Is located at the subunit interface close to the decoding center, probably blocks exit of the E-site tRNA. The sequence is that of Small ribosomal subunit protein uS7 from Picosynechococcus sp. (strain ATCC 27264 / PCC 7002 / PR-6) (Agmenellum quadruplicatum).